Consider the following 1501-residue polypeptide: Opaque-specific ABC transporter CDR3 (1501 aa).

The Cytoplasmic portion of the chain corresponds to 1-502 (MAKTSQAEGQ…KRYWDRMRGD (502 aa)). Positions 58-87 (TYTTATMHPNGINPISDKTDPTLDPESPSF) are disordered. The region spanning 140 to 395 (KYARNIFNKF…FKKMGFVCQD (256 aa)) is the ABC transporter 1 domain. The helical transmembrane segment at 503–523 (IIVPLSTVAGNIAMALILSSV) threads the bilayer. A glycan (N-linked (GlcNAc...) asparagine) is linked at Asn-530. Transmembrane regions (helical) follow at residues 540–560 (VMYY…YNMY), 589–609 (FPLK…MVNF), 614–634 (GAFF…SHLF), 653–673 (LLLF…YMLG), and 755–775 (FGVL…FVQT). Residues 776–1175 (NKSSISKGET…LFQQYWRTPS (400 aa)) are Cytoplasmic-facing. Positions 840–1083 (FHWRNLTYTV…LIEYFERNGA (244 aa)) constitute an ABC transporter 2 domain. ATP is bound at residue 876–883 (GASGAGKT). Helical transmembrane passes span 1176 to 1196 (YIYS…FTYY), 1212 to 1232 (IFSM…LFVT), 1261 to 1281 (IPYQ…PVGL), 1297 to 1317 (LMWL…QFCI), 1325 to 1345 (YAAN…GVIA), 1353 to 1375 (FWVF…SIGL), and 1451 to 1471 (GIFI…YWLF).

The protein belongs to the ABC transporter superfamily. ABCG family. PDR (TC 3.A.1.205) subfamily.

The protein localises to the membrane. The protein is Opaque-specific ABC transporter CDR3 (CDR3) of Candida albicans (Yeast).